Reading from the N-terminus, the 290-residue chain is Phosphate import ATP-binding protein PstB (290 aa).

Residues 25 to 285 (LEARNLDFYY…PKTRRARDYL (261 aa)) enclose the ABC transporter domain. 57-64 (GPSGCGKS) is a binding site for ATP.

Belongs to the ABC transporter superfamily. Phosphate importer (TC 3.A.1.7) family. The complex is composed of two ATP-binding proteins (PstB), two transmembrane proteins (PstC and PstA) and a solute-binding protein (PstS).

Its subcellular location is the cell inner membrane. The catalysed reaction is phosphate(out) + ATP + H2O = ADP + 2 phosphate(in) + H(+). Functionally, part of the ABC transporter complex PstSACB involved in phosphate import. Responsible for energy coupling to the transport system. This chain is Phosphate import ATP-binding protein PstB, found in Zymomonas mobilis subsp. mobilis (strain ATCC 31821 / ZM4 / CP4).